A 348-amino-acid polypeptide reads, in one-letter code: NADH-quinone oxidoreductase subunit H (348 aa).

The next 8 membrane-spanning stretches (helical) occupy residues Ile25 to Leu45, Phe95 to Ile115, Ile128 to Gly148, Ile168 to Phe188, Trp204 to Thr224, Phe254 to Phe274, Ile287 to Leu307, and Val327 to Ala347.

This sequence belongs to the complex I subunit 1 family. In terms of assembly, NDH-1 is composed of 14 different subunits. Subunits NuoA, H, J, K, L, M, N constitute the membrane sector of the complex.

It is found in the cell inner membrane. It catalyses the reaction a quinone + NADH + 5 H(+)(in) = a quinol + NAD(+) + 4 H(+)(out). NDH-1 shuttles electrons from NADH, via FMN and iron-sulfur (Fe-S) centers, to quinones in the respiratory chain. The immediate electron acceptor for the enzyme in this species is believed to be ubiquinone. Couples the redox reaction to proton translocation (for every two electrons transferred, four hydrogen ions are translocated across the cytoplasmic membrane), and thus conserves the redox energy in a proton gradient. This subunit may bind ubiquinone. The sequence is that of NADH-quinone oxidoreductase subunit H from Psychrobacter sp. (strain PRwf-1).